A 304-amino-acid polypeptide reads, in one-letter code: Glutaminase (304 aa).

Residues Ser63, Asn114, Glu158, Asn165, Tyr189, Tyr240, and Val258 each contribute to the substrate site.

This sequence belongs to the glutaminase family. As to quaternary structure, homotetramer.

The enzyme catalyses L-glutamine + H2O = L-glutamate + NH4(+). This is Glutaminase from Shewanella loihica (strain ATCC BAA-1088 / PV-4).